A 306-amino-acid polypeptide reads, in one-letter code: Serine/threonine-protein kinase mug51 (306 aa).

It belongs to the STK19 family.

It carries out the reaction L-seryl-[protein] + ATP = O-phospho-L-seryl-[protein] + ADP + H(+). The catalysed reaction is L-threonyl-[protein] + ATP = O-phospho-L-threonyl-[protein] + ADP + H(+). Functionally, serine/threonine-protein kinase. Has a role in meiosis. The polypeptide is Serine/threonine-protein kinase mug51 (mug51) (Schizosaccharomyces pombe (strain 972 / ATCC 24843) (Fission yeast)).